Reading from the N-terminus, the 203-residue chain is Recombination protein RecR (203 aa).

The C4-type zinc finger occupies 58–73 (CDYCGNLDVVSICNIC). One can recognise a Toprim domain in the interval 81-177 (SIIAIVESVA…KISKLASGIP (97 aa)).

This sequence belongs to the RecR family.

May play a role in DNA repair. It seems to be involved in an RecBC-independent recombinational process of DNA repair. It may act with RecF and RecO. The polypeptide is Recombination protein RecR (Orientia tsutsugamushi (strain Boryong) (Rickettsia tsutsugamushi)).